Here is a 422-residue protein sequence, read N- to C-terminus: 5-hydroxytryptamine receptor 1A (422 aa).

Residues Met1–Gly23 are disordered. The Extracellular segment spans residues Met1–Ile38. Residues Asn10, Asn11, and Asn24 are each glycosylated (N-linked (GlcNAc...) asparagine). Residues Thr39–Ala59 traverse the membrane as a helical segment. Residues Ala60–Tyr73 lie on the Cytoplasmic side of the membrane. A helical membrane pass occupies residues Leu74–Val98. Topologically, residues Leu99–Val107 are extracellular. Residues Thr108–Leu132 traverse the membrane as a helical segment. Cys109 and Cys187 form a disulfide bridge. The serotonin site is built by Asp116 and Cys120. The DRY motif; important for ligand-induced conformation changes motif lies at Asp133 to Tyr135. Residues Asp133–Arg152 are Cytoplasmic-facing. Residues Ala153–Gly174 form a helical membrane-spanning segment. The Extracellular segment spans residues Trp175 to His193. Residues Gly194–Gly216 traverse the membrane as a helical segment. Residues Arg217 to Thr346 lie on the Cytoplasmic side of the membrane. Residues Lys235 to Trp263 form a disordered region. Residues Thr314, Lys345, Thr346, and Gly352 each contribute to the 1D-myo-inositol 4-phosphate site. The chain crosses the membrane as a helical span at residues Leu347 to Phe370. At Cys371 to Pro378 the chain is on the extracellular side. The chain crosses the membrane as a helical span at residues Thr379–Phe403. Positions Asn396–Tyr400 match the NPxxY motif; important for ligand-induced conformation changes and signaling motif. 1D-myo-inositol 4-phosphate is bound by residues Phe403, Asn404, and Lys405. Residues Asn404–Gln422 lie on the Cytoplasmic side of the membrane.

It belongs to the G-protein coupled receptor 1 family. 5-hydroxytryptamine receptor subfamily. HTR1A sub-subfamily. Heterodimer; heterodimerizes with GPER1. Interacts with YIF1B. Interacts with GPR39 and GALR1.

It localises to the cell membrane. Its subcellular location is the cell projection. The protein localises to the dendrite. Its activity is regulated as follows. G-protein coupled receptor activity is regulated by lipids: phosphatidylinositol 4-phosphate increases HTR1A-mediated activity. Its function is as follows. G-protein coupled receptor for 5-hydroxytryptamine (serotonin). Also functions as a receptor for various drugs and psychoactive substances. Ligand binding causes a conformation change that triggers signaling via guanine nucleotide-binding proteins (G proteins) and modulates the activity of downstream effectors, such as adenylate cyclase. HTR1A is coupled to G(i)/G(o) G alpha proteins and mediates inhibitory neurotransmission: signaling inhibits adenylate cyclase activity and activates a phosphatidylinositol-calcium second messenger system that regulates the release of Ca(2+) ions from intracellular stores. Beta-arrestin family members regulate signaling by mediating both receptor desensitization and resensitization processes. This chain is 5-hydroxytryptamine receptor 1A (HTR1A), found in Pongo pygmaeus (Bornean orangutan).